The primary structure comprises 502 residues: Histidine--tRNA ligase (502 aa).

Belongs to the class-II aminoacyl-tRNA synthetase family. As to quaternary structure, homodimer.

Its subcellular location is the cytoplasm. It carries out the reaction tRNA(His) + L-histidine + ATP = L-histidyl-tRNA(His) + AMP + diphosphate + H(+). This Brucella suis (strain ATCC 23445 / NCTC 10510) protein is Histidine--tRNA ligase.